Here is a 242-residue protein sequence, read N- to C-terminus: Ribose-5-phosphate isomerase A (242 aa).

Residues 39-42 (SGST), 95-98 (DGAD), and 108-111 (KGGG) contribute to the substrate site. E117 (proton acceptor) is an active-site residue. Residue K135 participates in substrate binding.

It belongs to the ribose 5-phosphate isomerase family. Homodimer.

The enzyme catalyses aldehydo-D-ribose 5-phosphate = D-ribulose 5-phosphate. Its pathway is carbohydrate degradation; pentose phosphate pathway; D-ribose 5-phosphate from D-ribulose 5-phosphate (non-oxidative stage): step 1/1. Catalyzes the reversible conversion of ribose-5-phosphate to ribulose 5-phosphate. This chain is Ribose-5-phosphate isomerase A, found in Chlamydia trachomatis serovar A (strain ATCC VR-571B / DSM 19440 / HAR-13).